A 216-amino-acid chain; its full sequence is UPF0502 protein Ent638_1581 (216 aa).

The protein belongs to the UPF0502 family.

The chain is UPF0502 protein Ent638_1581 from Enterobacter sp. (strain 638).